Consider the following 1058-residue polypeptide: Ubiquitin-like modifier-activating enzyme 1 (1058 aa).

The disordered stretch occupies residues 1 to 47; that stretch reads MSSSPLSKKRRVSGPDPKPGSNCSPAQSVLPQVPSAPTNGMAKNGSE. Ser-2 carries the post-translational modification N-acetylserine. Ser-4, Ser-13, Ser-21, Ser-24, and Ser-46 each carry phosphoserine. Polar residues predominate over residues 21 to 38; that stretch reads SNCSPAQSVLPQVPSAPT. The residue at position 55 (Tyr-55) is a Phosphotyrosine. Tandem repeats lie at residues 63-199 and 459-611. The tract at residues 63 to 611 is 2 approximate repeats; it reads GHEAMKRLQT…GTKGNVQVVI (549 aa). Residues Ala-478, Asp-504, Arg-515, Lys-528, and 576–577 contribute to the ATP site; that span reads DN. An N6-succinyllysine modification is found at Lys-528. Cys-632 (glycyl thioester intermediate) is an active-site residue. Lys-671 is subject to N6-acetyllysine. At Thr-800 the chain carries Phosphothreonine. Residues Ser-810, Ser-816, Ser-820, and Ser-835 each carry the phosphoserine modification. The residue at position 980 (Lys-980) is an N6-acetyllysine.

It belongs to the ubiquitin-activating E1 family. In terms of assembly, monomer. In terms of tissue distribution, ubiquitous.

It is found in the cytoplasm. The protein localises to the mitochondrion. It localises to the nucleus. It carries out the reaction ATP + ubiquitin + [E1 ubiquitin-activating enzyme]-L-cysteine = AMP + diphosphate + S-ubiquitinyl-[E1 ubiquitin-activating enzyme]-L-cysteine.. Its pathway is protein modification; protein ubiquitination. Functionally, catalyzes the first step in ubiquitin conjugation to mark cellular proteins for degradation through the ubiquitin-proteasome system. Activates ubiquitin by first adenylating its C-terminal glycine residue with ATP, and thereafter linking this residue to the side chain of a cysteine residue in E1, yielding a ubiquitin-E1 thioester and free AMP. Essential for the formation of radiation-induced foci, timely DNA repair and for response to replication stress. Promotes the recruitment of TP53BP1 and BRCA1 at DNA damage sites. The sequence is that of Ubiquitin-like modifier-activating enzyme 1 (UBA1) from Oryctolagus cuniculus (Rabbit).